The chain runs to 378 residues: Beta-1,3-N-acetylglucosaminyltransferase lunatic fringe (378 aa).

Residues 1–8 (MLQRCGRR) lie on the Cytoplasmic side of the membrane. The helical; Signal-anchor for type II membrane protein transmembrane segment at 9–29 (LLLALVGALLACLLVLTADPP) threads the bilayer. At 30-378 (PTPMPAERGR…TPWCPRSAIF (349 aa)) the chain is on the lumenal side. Residues 85 to 108 (RDADPPPGVASRQGDGHPRPPAEV) form a disordered region. Arg128 lines the substrate pocket. N-linked (GlcNAc...) asparagine glycosylation occurs at Asn166. 2 disulfide bridges follow: Cys167-Cys178 and Cys196-Cys259. A substrate-binding site is contributed by Asp200. Residue Asp201 participates in Mn(2+) binding. The active site involves Asp289. His313 provides a ligand contact to Mn(2+). A disulfide bridge links Cys363 with Cys372.

Belongs to the glycosyltransferase 31 family. It depends on Mn(2+) as a cofactor. Co(2+) is required as a cofactor. In terms of processing, a soluble form may be derived from the membrane form by proteolytic processing. In terms of tissue distribution, detected at 12.5 dpc in all tissues examined with the highest level observed in adult brain and spleen. Detected in the dental epithelium.

The protein resides in the golgi apparatus. It is found in the golgi apparatus membrane. The catalysed reaction is 3-O-(alpha-L-fucosyl)-L-threonyl-[EGF-like domain protein] + UDP-N-acetyl-alpha-D-glucosamine = 3-O-(N-acetyl-beta-D-glucosaminyl-(1-&gt;3)-alpha-L-fucosyl)-L-threonyl-[EGF-like domain protein] + UDP + H(+). The enzyme catalyses 3-O-(alpha-L-fucosyl)-L-seryl-[EGF-like domain protein] + UDP-N-acetyl-alpha-D-glucosamine = 3-O-(N-acetyl-beta-D-glucosaminyl-(1-&gt;3)-alpha-L-fucosyl)-L-seryl-[EGF-like domain protein] + UDP + H(+). Functionally, glycosyltransferase that initiates the elongation of O-linked fucose residues attached to EGF-like repeats in the extracellular domain of Notch molecules. Modulates NOTCH1 activity by modifying O-fucose residues at specific EGF-like domains resulting in inhibition of NOTCH1 activation by JAG1 and enhancement of NOTCH1 activation by DLL1 via an increase in its binding to DLL1. Decreases the binding of JAG1 to NOTCH2 but not that of DLL1. Essential mediator of somite segmentation and patterning. During somite boundary formation, it restricts Notch activity in the presomitic mesoderm to a boundary-forming territory in the posterior half of the prospective somite. In this region, Notch function activates a set of genes that are involved in boundary formation and in anterior-posterior somite identity. Ectopically expressed in the thymus, Lfgn inhibits Notch signaling which results in inhibition of T-cell commitment and promotes B-cell development in lymphoid progenitors. May play a role in boundary formation of the enamel knot. This chain is Beta-1,3-N-acetylglucosaminyltransferase lunatic fringe, found in Mus musculus (Mouse).